Reading from the N-terminus, the 211-residue chain is Cytochrome c biogenesis ATP-binding export protein CcmA (211 aa).

The region spanning 17 to 209 (LDVEDVTVFR…PSLAHVESFW (193 aa)) is the ABC transporter domain. Residue 49–56 (GPNGAGKS) participates in ATP binding.

The protein belongs to the ABC transporter superfamily. CcmA exporter (TC 3.A.1.107) family. The complex is composed of two ATP-binding proteins (CcmA) and two transmembrane proteins (CcmB).

Its subcellular location is the cell inner membrane. The enzyme catalyses heme b(in) + ATP + H2O = heme b(out) + ADP + phosphate + H(+). Functionally, part of the ABC transporter complex CcmAB involved in the biogenesis of c-type cytochromes; once thought to export heme, this seems not to be the case, but its exact role is uncertain. Responsible for energy coupling to the transport system. This Gluconobacter oxydans (strain 621H) (Gluconobacter suboxydans) protein is Cytochrome c biogenesis ATP-binding export protein CcmA.